The primary structure comprises 273 residues: 4-hydroxy-tetrahydrodipicolinate reductase (273 aa).

NAD(+) contacts are provided by residues 12–17 (GAGGRM) and glutamate 38. Arginine 39 is a binding site for NADP(+). NAD(+) contacts are provided by residues 102-104 (GTT) and 126-129 (AANF). Histidine 159 (proton donor/acceptor) is an active-site residue. Histidine 160 is a binding site for (S)-2,3,4,5-tetrahydrodipicolinate. The active-site Proton donor is lysine 163. 169 to 170 (GT) lines the (S)-2,3,4,5-tetrahydrodipicolinate pocket.

It belongs to the DapB family. Homotetramer.

It is found in the cytoplasm. The catalysed reaction is (S)-2,3,4,5-tetrahydrodipicolinate + NAD(+) + H2O = (2S,4S)-4-hydroxy-2,3,4,5-tetrahydrodipicolinate + NADH + H(+). It carries out the reaction (S)-2,3,4,5-tetrahydrodipicolinate + NADP(+) + H2O = (2S,4S)-4-hydroxy-2,3,4,5-tetrahydrodipicolinate + NADPH + H(+). Its pathway is amino-acid biosynthesis; L-lysine biosynthesis via DAP pathway; (S)-tetrahydrodipicolinate from L-aspartate: step 4/4. Its function is as follows. Catalyzes the conversion of 4-hydroxy-tetrahydrodipicolinate (HTPA) to tetrahydrodipicolinate. In Yersinia enterocolitica serotype O:8 / biotype 1B (strain NCTC 13174 / 8081), this protein is 4-hydroxy-tetrahydrodipicolinate reductase.